Consider the following 551-residue polypeptide: Cleavage and polyadenylation specificity factor subunit 6 (551 aa).

An RRM domain is found at 81-161 (IALYIGNLTW…QNPVVTPCNK (81 aa)). Threonine 157 carries the phosphothreonine modification. Residues 169–180 (MQSRKTTQSGQM) show a composition bias toward polar residues. Disordered regions lie at residues 169–410 (MQSR…TPLS) and 477–551 (LHGI…YRHR). Composition is skewed to pro residues over residues 237–265 (TRPP…PLAG), 285–366 (GQPP…PPPA), and 377–388 (GPPPTDPYGRPP). 2 stretches are compositionally biased toward basic and acidic residues: residues 389–404 (PYDR…EMDA) and 489–503 (SRRE…SRSR). Phosphoserine occurs at positions 494, 500, 511, 513, and 525. Positions 504–514 (EKSRRHKSRSR) are enriched in basic residues. A compositionally biased stretch (basic and acidic residues) spans 515-551 (DRHDDYYRERSRERERHRDRDRDRDRERDREREYRHR).

The protein belongs to the RRM CPSF6/7 family. In terms of assembly, component of the cleavage factor Im (CFIm) complex.

It is found in the nucleus. The protein resides in the nucleoplasm. It localises to the nucleus speckle. Its subcellular location is the cytoplasm. Its function is as follows. Component of the cleavage factor Im (CFIm) complex that functions as an activator of the pre-mRNA 3'-end cleavage and polyadenylation processing required for the maturation of pre-mRNA into functional mRNAs. CFIm contributes to the recruitment of multiprotein complexes on specific sequences on the pre-mRNA 3'-end, so called cleavage and polyadenylation signals (pA signals). Most pre-mRNAs contain multiple pA signals, resulting in alternative cleavage and polyadenylation (APA) producing mRNAs with variable 3'-end formation. The CFIm complex acts as a key regulator of cleavage and polyadenylation site choice during APA through its binding to 5'-UGUA-3' elements localized in the 3'-untranslated region (UTR) for a huge number of pre-mRNAs. Plays a role in mRNA export. The protein is Cleavage and polyadenylation specificity factor subunit 6 of Gallus gallus (Chicken).